Here is a 425-residue protein sequence, read N- to C-terminus: Interferon regulatory factor 8 (425 aa).

Residues 7–114 (GRRLRQWLIE…EPYKVYRIVP (108 aa)) constitute a DNA-binding region (IRF tryptophan pentad repeat).

The protein belongs to the IRF family.

The protein localises to the nucleus. It is found in the cytoplasm. Functionally, plays a role as a transcriptional activator or repressor. Specifically binds to the upstream regulatory region of type I IFN and IFN-inducible MHC class I genes (the interferon consensus sequence (ICS)). Plays a regulatory role in cells of the immune system. This chain is Interferon regulatory factor 8 (IRF8), found in Gallus gallus (Chicken).